The following is a 339-amino-acid chain: MLKRLLSKCAEGETLTEAEAYEAMNAVMSGEATDSQIASLVSILRVRGETVDEIAGFVRAMRDRMTTIDAGDDVIDTCGTGGDGAATFNVSTAAAIVVSSLGVKVAKHGNRAVSSKSGSADVLERLGIDIPASPEAAKQALETKGLAFLFAPLYHAAMKYAAGPRKEIGFRTIFNLIGPLANPARCKRQVIGVYSTRYAEKLAETMRRLGSEHVVFVTGRDGLDECSIAAETDVVELKDGDIRRFVLTPESVGLRXGGLADVQVRSSEESAALLEAVMDGTAPASAIDITALNAGVALYAAGKAETIAAGVAMAKDAILVKTAYEQLQRLRRKEVVHGA.

Residues Gly79, 82–83 (GD), Thr87, 89–92 (NVST), 107–115 (KHGNRAVSS), and Ser119 each bind 5-phospho-alpha-D-ribose 1-diphosphate. An anthranilate-binding site is contributed by Gly79. Position 91 (Ser91) interacts with Mg(2+). Asn110 is a binding site for anthranilate. An anthranilate-binding site is contributed by Arg165. Mg(2+)-binding residues include Asp224 and Glu225.

It belongs to the anthranilate phosphoribosyltransferase family. Homodimer. Mg(2+) is required as a cofactor.

It carries out the reaction N-(5-phospho-beta-D-ribosyl)anthranilate + diphosphate = 5-phospho-alpha-D-ribose 1-diphosphate + anthranilate. It functions in the pathway amino-acid biosynthesis; L-tryptophan biosynthesis; L-tryptophan from chorismate: step 2/5. Its function is as follows. Catalyzes the transfer of the phosphoribosyl group of 5-phosphorylribose-1-pyrophosphate (PRPP) to anthranilate to yield N-(5'-phosphoribosyl)-anthranilate (PRA). The sequence is that of Anthranilate phosphoribosyltransferase from Geobacillus stearothermophilus (Bacillus stearothermophilus).